A 718-amino-acid chain; its full sequence is Homeobox-leucine zipper protein HDG9 (718 aa).

Residues 1–12 show a composition bias toward basic and acidic residues; the sequence is MDFTRDDNSSDE. The tract at residues 1-35 is disordered; sequence MDFTRDDNSSDERENDVDANTNNRHEKKGYHRHTN. The homeobox DNA-binding region spans 26–85; that stretch reads EKKGYHRHTNEQIHRLETYFKECPHPDEFQRRLLGEELNLKPKQIKFWFQNKRTQAKSHN. Positions 78 to 152 form a coiled coil; it reads RTQAKSHNEK…LKDEYERVSN (75 aa). The tract at residues 169 to 209 is disordered; that stretch reads PYLHGPSNHASTSKNRPALYGTSSNRLPEPSSIFRGPYTRG. A compositionally biased stretch (polar residues) spans 176–194; that stretch reads NHASTSKNRPALYGTSSNR. Positions 232–464 constitute an START domain; the sequence is SQLEKIAMLE…LERTCERLIF (233 aa).

Belongs to the HD-ZIP homeobox family. Class IV subfamily. In terms of tissue distribution, expressed in anthers with highest levels in the tapetum and pollen grains, and chalazal end of the embryo sac.

The protein localises to the nucleus. In terms of biological role, probable transcription factor that binds to the DNA sequence 5'-GCATTAAATGCGCA-3'. This Arabidopsis thaliana (Mouse-ear cress) protein is Homeobox-leucine zipper protein HDG9 (HDG9).